Reading from the N-terminus, the 487-residue chain is Chromosomal replication initiator protein DnaA (487 aa).

Residues 1-79 form a domain I, interacts with DnaA modulators region; that stretch reads MEKSKNIWSL…GYNNIVIVFT (79 aa). Residues 79–142 form a domain II region; it reads TNQPPKTHSN…EEEPTNFKNP (64 aa). The domain III, AAA+ region stretch occupies residues 143–359; it reads FLKKRYTFEN…AAVTKLKAYI (217 aa). Residues glycine 187, glycine 189, lysine 190, and threonine 191 each contribute to the ATP site. A domain IV, binds dsDNA region spans residues 360–487; it reads DLDNIEIDIE…TELMNKIKKN (128 aa).

The protein belongs to the DnaA family. As to quaternary structure, oligomerizes as a right-handed, spiral filament on DNA at oriC.

It localises to the cytoplasm. Its function is as follows. Plays an essential role in the initiation and regulation of chromosomal replication. ATP-DnaA binds to the origin of replication (oriC) to initiate formation of the DNA replication initiation complex once per cell cycle. Binds the DnaA box (a 9 base pair repeat at the origin) and separates the double-stranded (ds)DNA. Forms a right-handed helical filament on oriC DNA; dsDNA binds to the exterior of the filament while single-stranded (ss)DNA is stabiized in the filament's interior. The ATP-DnaA-oriC complex binds and stabilizes one strand of the AT-rich DNA unwinding element (DUE), permitting loading of DNA polymerase. After initiation quickly degrades to an ADP-DnaA complex that is not apt for DNA replication. Binds acidic phospholipids. This Borreliella burgdorferi (strain ZS7) (Borrelia burgdorferi) protein is Chromosomal replication initiator protein DnaA.